A 402-amino-acid chain; its full sequence is CCA-adding enzyme (402 aa).

Positions 32 and 35 each coordinate ATP. CTP contacts are provided by G32 and R35. 2 residues coordinate Mg(2+): D45 and D47. The ATP site is built by R116, D159, R162, R165, and R168. 5 residues coordinate CTP: R116, D159, R162, R165, and R168.

The protein belongs to the tRNA nucleotidyltransferase/poly(A) polymerase family. Bacterial CCA-adding enzyme type 3 subfamily. In terms of assembly, homodimer. It depends on Mg(2+) as a cofactor.

The catalysed reaction is a tRNA precursor + 2 CTP + ATP = a tRNA with a 3' CCA end + 3 diphosphate. It carries out the reaction a tRNA with a 3' CCA end + 2 CTP + ATP = a tRNA with a 3' CCACCA end + 3 diphosphate. In terms of biological role, catalyzes the addition and repair of the essential 3'-terminal CCA sequence in tRNAs without using a nucleic acid template. Adds these three nucleotides in the order of C, C, and A to the tRNA nucleotide-73, using CTP and ATP as substrates and producing inorganic pyrophosphate. tRNA 3'-terminal CCA addition is required both for tRNA processing and repair. Also involved in tRNA surveillance by mediating tandem CCA addition to generate a CCACCA at the 3' terminus of unstable tRNAs. While stable tRNAs receive only 3'-terminal CCA, unstable tRNAs are marked with CCACCA and rapidly degraded. In Streptococcus pyogenes serotype M4 (strain MGAS10750), this protein is CCA-adding enzyme.